Here is a 159-residue protein sequence, read N- to C-terminus: Calcium-binding protein CML39 (159 aa).

4 EF-hand domains span residues 18–53 (EKNR…LGEQ), 54–89 (MSDE…NDEF), 93–128 (EKKR…LGES), and 129–159 (RTTD…LMMR). 10 residues coordinate Ca(2+): Asp-31, Asn-33, Asp-35, Arg-37, Glu-42, Asp-67, Asp-69, Asp-71, Met-73, and Glu-78. Ca(2+) contacts are provided by Asp-142, Asn-144, Asp-146, and Glu-153.

In terms of tissue distribution, expressed in the zones of elongation and differentiation in seedling roots and at the root-hypocotyl junction. Expressed from stage 12 of flower development in anthers, specifically in pollen.

Its function is as follows. Potential calcium sensor that binds calcium in vitro. The polypeptide is Calcium-binding protein CML39 (CML39) (Arabidopsis thaliana (Mouse-ear cress)).